The chain runs to 124 residues: Holo-[acyl-carrier-protein] synthase (124 aa).

Mg(2+)-binding residues include Asp7 and Glu55.

Belongs to the P-Pant transferase superfamily. AcpS family. The cofactor is Mg(2+).

Its subcellular location is the cytoplasm. The enzyme catalyses apo-[ACP] + CoA = holo-[ACP] + adenosine 3',5'-bisphosphate + H(+). Transfers the 4'-phosphopantetheine moiety from coenzyme A to a Ser of acyl-carrier-protein. The protein is Holo-[acyl-carrier-protein] synthase of Borrelia garinii subsp. bavariensis (strain ATCC BAA-2496 / DSM 23469 / PBi) (Borreliella bavariensis).